The primary structure comprises 341 residues: HTH-type transcriptional repressor PurR (341 aa).

In terms of domain architecture, HTH lacI-type spans 2–56 (ATIKDVAKHAGVSTTTVSHVINKTRFVAENTKAAVWAAIKELHYSPSAVARSLKV). A DNA-binding region (H-T-H motif) is located at residues 4-23 (IKDVAKHAGVSTTTVSHVIN). A DNA-binding region spans residues 48 to 56 (SAVARSLKV). Residues Tyr-73, Arg-190, Thr-192, and Asp-275 each contribute to the hypoxanthine site.

In terms of assembly, homodimer.

The protein operates within purine metabolism; purine nucleotide biosynthesis [regulation]. Its function is as follows. Is the main repressor of the genes involved in the de novo synthesis of purine nucleotides, regulating purB, purC, purEK, purF, purHD, purL, purMN and guaBA expression. PurR is allosterically activated to bind its cognate DNA by binding the purine corepressors, hypoxanthine or guanine, thereby effecting transcription repression. The protein is HTH-type transcriptional repressor PurR of Yersinia pestis bv. Antiqua (strain Antiqua).